A 127-amino-acid polypeptide reads, in one-letter code: S1-like domain-containing protein C146.08c (127 aa).

The S1-like domain occupies 10–86 (SFDPPARLEK…NKIDGTILYV (77 aa)). Residues 107 to 127 (ESLNQNDSEESSSSEEEYDSD) are disordered. A compositionally biased stretch (acidic residues) spans 113-127 (DSEESSSSEEEYDSD). Y124 carries the post-translational modification Phosphotyrosine. S126 carries the phosphoserine modification.

The protein belongs to the EIF1AD family.

Its subcellular location is the cytoplasm. The protein localises to the nucleus. This is S1-like domain-containing protein C146.08c from Schizosaccharomyces pombe (strain 972 / ATCC 24843) (Fission yeast).